Here is a 274-residue protein sequence, read N- to C-terminus: NADPH-dependent 7-cyano-7-deazaguanine reductase (274 aa).

80–82 provides a ligand contact to substrate; the sequence is VES. Position 82–83 (82–83) interacts with NADPH; it reads SK. The active-site Thioimide intermediate is the C181. D188 (proton donor) is an active-site residue. Position 220 to 221 (220 to 221) interacts with substrate; sequence HE. 249-250 serves as a coordination point for NADPH; that stretch reads RG.

It belongs to the GTP cyclohydrolase I family. QueF type 2 subfamily. As to quaternary structure, homodimer.

The protein resides in the cytoplasm. It carries out the reaction 7-aminomethyl-7-carbaguanine + 2 NADP(+) = 7-cyano-7-deazaguanine + 2 NADPH + 3 H(+). It participates in tRNA modification; tRNA-queuosine biosynthesis. Catalyzes the NADPH-dependent reduction of 7-cyano-7-deazaguanine (preQ0) to 7-aminomethyl-7-deazaguanine (preQ1). The chain is NADPH-dependent 7-cyano-7-deazaguanine reductase from Paraburkholderia phymatum (strain DSM 17167 / CIP 108236 / LMG 21445 / STM815) (Burkholderia phymatum).